Here is a 126-residue protein sequence, read N- to C-terminus: MQMLIPQRLLLILNPILMMKRKKRKKRKKRRERETMMKIPRILKKLRRKRRTRRKRRKRRKRRRRKRRKRRRKRSPRKRRKRRNKDAFYILIISDPSRSLLFGFRKFSIIIQCLTYFSFHILFHNL.

Basic residues-rich tracts occupy residues 21-31 (RKKRKKRKKRR) and 41-83 (RILK…RKRR). The segment at 21 to 83 (RKKRKKRKKR…RSPRKRRKRR (63 aa)) is disordered.

This is an uncharacterized protein from Saccharomyces cerevisiae (strain ATCC 204508 / S288c) (Baker's yeast).